A 391-amino-acid chain; its full sequence is Arsenite methyltransferase (391 aa).

Residues 1 to 126 (MELWTHPTPA…TMVADRDPEE (126 aa)) are disordered. A compositionally biased stretch (polar residues) spans 28 to 39 (CSQPWATTPGTN). Residues 40-65 (SSDASRTPTTASASATSKPQSASARA) show a composition bias toward low complexity. A compositionally biased stretch (polar residues) spans 102–116 (KRSTTCEATMSNDNE).

It belongs to the methyltransferase superfamily. Arsenite methyltransferase family.

It carries out the reaction arsenic triglutathione + [thioredoxin]-dithiol + S-adenosyl-L-methionine + 2 H2O = methylarsonous acid + [thioredoxin]-disulfide + 3 glutathione + S-adenosyl-L-homocysteine + H(+). It catalyses the reaction arsenic triglutathione + 2 [thioredoxin]-dithiol + 2 S-adenosyl-L-methionine + H2O = dimethylarsinous acid + 2 [thioredoxin]-disulfide + 3 glutathione + 2 S-adenosyl-L-homocysteine + 2 H(+). The catalysed reaction is arsenic triglutathione + 3 [thioredoxin]-dithiol + 3 S-adenosyl-L-methionine = trimethylarsine + 3 [thioredoxin]-disulfide + 3 glutathione + 3 S-adenosyl-L-homocysteine + 3 H(+). Its function is as follows. Catalyzes the transfer of a methyl group from AdoMet to arsenite, producing methylated arsenicals. This chain is Arsenite methyltransferase, found in Halobacterium salinarum (strain ATCC 700922 / JCM 11081 / NRC-1) (Halobacterium halobium).